The chain runs to 251 residues: Aspartate/glutamate leucyltransferase (251 aa).

This sequence belongs to the R-transferase family. Bpt subfamily.

It localises to the cytoplasm. The catalysed reaction is N-terminal L-glutamyl-[protein] + L-leucyl-tRNA(Leu) = N-terminal L-leucyl-L-glutamyl-[protein] + tRNA(Leu) + H(+). The enzyme catalyses N-terminal L-aspartyl-[protein] + L-leucyl-tRNA(Leu) = N-terminal L-leucyl-L-aspartyl-[protein] + tRNA(Leu) + H(+). In terms of biological role, functions in the N-end rule pathway of protein degradation where it conjugates Leu from its aminoacyl-tRNA to the N-termini of proteins containing an N-terminal aspartate or glutamate. This is Aspartate/glutamate leucyltransferase from Xanthomonas oryzae pv. oryzae (strain MAFF 311018).